We begin with the raw amino-acid sequence, 395 residues long: LL-diaminopimelate aminotransferase (395 aa).

2 residues coordinate substrate: Y14 and G41. Pyridoxal 5'-phosphate is bound by residues Y71, 104–105, Y128, N174, Y205, and 233–235; these read AK and SFS. 3 residues coordinate substrate: K105, Y128, and N174. Residue K236 is modified to N6-(pyridoxal phosphate)lysine. Pyridoxal 5'-phosphate is bound by residues R244 and N275. N275 and R368 together coordinate substrate.

This sequence belongs to the class-I pyridoxal-phosphate-dependent aminotransferase family. LL-diaminopimelate aminotransferase subfamily. In terms of assembly, homodimer. The cofactor is pyridoxal 5'-phosphate.

It catalyses the reaction (2S,6S)-2,6-diaminopimelate + 2-oxoglutarate = (S)-2,3,4,5-tetrahydrodipicolinate + L-glutamate + H2O + H(+). It functions in the pathway amino-acid biosynthesis; L-lysine biosynthesis via DAP pathway; LL-2,6-diaminopimelate from (S)-tetrahydrodipicolinate (aminotransferase route): step 1/1. Its function is as follows. Involved in the synthesis of meso-diaminopimelate (m-DAP or DL-DAP), required for both lysine and peptidoglycan biosynthesis. Catalyzes the direct conversion of tetrahydrodipicolinate to LL-diaminopimelate. This Chlamydia caviae (strain ATCC VR-813 / DSM 19441 / 03DC25 / GPIC) (Chlamydophila caviae) protein is LL-diaminopimelate aminotransferase.